The sequence spans 652 residues: DNA ligase (652 aa).

NAD(+) contacts are provided by residues 29–33 (DSDYD), 78–79 (SL), and Glu-107. Lys-109 acts as the N6-AMP-lysine intermediate in catalysis. Arg-130, Glu-164, Lys-278, and Lys-302 together coordinate NAD(+). Zn(2+)-binding residues include Cys-395, Cys-398, Cys-413, and Cys-418. The 76-residue stretch at 577–652 (NSDAALFGLT…IEDEDWLRQL (76 aa)) folds into the BRCT domain.

The protein belongs to the NAD-dependent DNA ligase family. LigA subfamily. It depends on Mg(2+) as a cofactor. Mn(2+) serves as cofactor.

The catalysed reaction is NAD(+) + (deoxyribonucleotide)n-3'-hydroxyl + 5'-phospho-(deoxyribonucleotide)m = (deoxyribonucleotide)n+m + AMP + beta-nicotinamide D-nucleotide.. DNA ligase that catalyzes the formation of phosphodiester linkages between 5'-phosphoryl and 3'-hydroxyl groups in double-stranded DNA using NAD as a coenzyme and as the energy source for the reaction. It is essential for DNA replication and repair of damaged DNA. In Streptococcus pyogenes serotype M49 (strain NZ131), this protein is DNA ligase.